A 776-amino-acid polypeptide reads, in one-letter code: Ribosomal biogenesis protein LAS1L (776 aa).

The span at 185–227 (DEDQLDAEDPEEEEREIIADDVLEEIPEPQDDDKDEELAVEDD) shows a compositional bias: acidic residues. The interval 185-247 (DEDQLDAEDP…SHPEPSSRHK (63 aa)) is disordered. Residues 228 to 247 (ANTKGNEEVASHPEPSSRHK) are compositionally biased toward basic and acidic residues. Residues serine 425 and serine 509 each carry the phosphoserine modification. Positions 501 to 646 (KAIEGSSSSS…DYDDDEEEDR (146 aa)) are disordered. Positions 544–557 (GNLKDVKQEEKKEN) are enriched in basic and acidic residues. Composition is skewed to acidic residues over residues 558-602 (EEEE…EEEE) and 611-646 (MEAD…EEDR). Serine 658 carries the phosphoserine modification. The interaction with NOL9 stretch occupies residues 677–696 (SAWQVSSEDVRWGTFPLGRL). Positions 733–759 (SSTLSLCCGGSNTNSSSSSSSGNMEGL) are disordered. The span at 741–755 (GGSNTNSSSSSSSGN) shows a compositional bias: low complexity.

The protein belongs to the LAS1 family. As to quaternary structure, component of some MLL1/MLL complex, at least composed of the core components KMT2A/MLL1, ASH2L, HCFC1/HCF1, WDR5 and RBBP5, as well as the facultative components BACC1, CHD8, E2F6, HSP70, INO80C, KANSL1, LAS1L, MAX, MCRS1, MGA, MYST1/MOF, PELP1, PHF20, PRP31, RING2, RUVB1/TIP49A, RUVB2/TIP49B, SENP3, TAF1, TAF4, TAF6, TAF7, TAF9 and TEX10. Component of the 5FMC complex, at least composed of PELP1, LAS1L, TEX10, WDR18 and SENP3; the complex interacts with methylated CHTOP and ZNF148. Interacts with NOL9 to form an ITS2 pre-rRNA endonuclease-kinase complex.

It is found in the nucleus. The protein localises to the nucleolus. It localises to the nucleoplasm. The protein resides in the cytoplasm. Its function is as follows. Required for the synthesis of the 60S ribosomal subunit and maturation of the 28S rRNA. Functions as a component of the Five Friends of Methylated CHTOP (5FMC) complex; the 5FMC complex is recruited to ZNF148 by methylated CHTOP, leading to desumoylation of ZNF148 and subsequent transactivation of ZNF148 target genes. Required for the efficient pre-rRNA processing at both ends of internal transcribed spacer 2 (ITS2). This Mus musculus (Mouse) protein is Ribosomal biogenesis protein LAS1L (Las1l).